A 138-amino-acid polypeptide reads, in one-letter code: Large ribosomal subunit protein uL16 (138 aa).

The protein belongs to the universal ribosomal protein uL16 family. As to quaternary structure, part of the 50S ribosomal subunit.

Functionally, binds 23S rRNA and is also seen to make contacts with the A and possibly P site tRNAs. The sequence is that of Large ribosomal subunit protein uL16 from Chlamydia muridarum (strain MoPn / Nigg).